The primary structure comprises 65 residues: Peptide ToAcP (65 aa).

The signal sequence occupies residues 1-24 (MKMKMIVVISILLIVFSLSSKAMS). A propeptide spanning residues 25 to 34 (LEDEQESVQR) is cleaved from the precursor. Alanine amide is present on Ala-58. Residues 59-65 (GRFDPAV) constitute a propeptide that is removed on maturation.

In terms of tissue distribution, expressed by the venom gland.

It localises to the secreted. Functionally, helical wheel projections predict no hydrophobic face, suggesting a non-amphipathic peptide. Does not show antifungal activity. This Tityus obscurus (Amazonian scorpion) protein is Peptide ToAcP.